We begin with the raw amino-acid sequence, 268 residues long: 2,5-diamino-6-ribosylamino-4(3H)-pyrimidinone 5'-phosphate reductase (268 aa).

NADP(+)-binding positions include threonine 68, aspartate 72, 103–106 (SNLR), and 191–195 (GAELL).

The protein belongs to the HTP reductase family. Homodimer.

The catalysed reaction is 2,5-diamino-6-(1-D-ribitylamino)pyrimidin-4(3H)-one 5'-phosphate + NADP(+) = 2,5-diamino-6-(1-D-ribosylamino)pyrimidin-4(3H)-one 5'-phosphate + NADPH + H(+). The enzyme catalyses 2,5-diamino-6-(1-D-ribitylamino)pyrimidin-4(3H)-one 5'-phosphate + NAD(+) = 2,5-diamino-6-(1-D-ribosylamino)pyrimidin-4(3H)-one 5'-phosphate + NADH + H(+). It participates in cofactor biosynthesis; riboflavin biosynthesis. Functionally, catalyzes an early step in riboflavin biosynthesis, the NADPH-dependent reduction of the ribose side chain of 2,5-diamino-6-ribosylamino-4(3H)-pyrimidinone 5'-phosphate, yielding 2,5-diamino-6-ribitylamino-4(3H)-pyrimidinone 5'-phosphate. The sequence is that of 2,5-diamino-6-ribosylamino-4(3H)-pyrimidinone 5'-phosphate reductase from Schizosaccharomyces pombe (strain 972 / ATCC 24843) (Fission yeast).